Reading from the N-terminus, the 541-residue chain is CRISPR-associated exonuclease Cas4/endonuclease Cas1 fusion (541 aa).

The tract at residues 1 to 179 is CRISPR-associated exonuclease Cas4; it reads MGIHSLLYCE…NCSLAPVCLP (179 aa). C9 is a binding site for [4Fe-4S] cluster. The Mn(2+) site is built by D65 and E78. [4Fe-4S] cluster is bound by residues C168, C171, and C177. Residues 204 to 541 form a CRISPR-associated endonuclease Cas1 region; it reads TLHVFGHDSR…ANIFAQARLR (338 aa). The Mn(2+) site is built by E365, H433, and E448.

In the N-terminal section; belongs to the CRISPR-associated exonuclease Cas4 family. The protein in the C-terminal section; belongs to the CRISPR-associated endonuclease Cas1 family. Homodimer, forms a heterotetramer with a Cas2 homodimer. [4Fe-4S] cluster is required as a cofactor. Mg(2+) serves as cofactor. The cofactor is Mn(2+).

The catalysed reaction is exonucleolytic cleavage in the 5'- to 3'-direction to yield nucleoside 3'-phosphates.. Its function is as follows. CRISPR (clustered regularly interspaced short palindromic repeat), is an adaptive immune system that provides protection against mobile genetic elements (viruses, transposable elements and conjugative plasmids). CRISPR clusters contain spacers, sequences complementary to antecedent mobile elements, and target invading nucleic acids. CRISPR clusters are transcribed and processed into CRISPR RNA (crRNA). The Cas4 region acts as a ssDNA exonuclease, while the Cas1 region acts as a dsDNA endonuclease. Involved in the integration of spacer DNA into the CRISPR cassette. The sequence is that of CRISPR-associated exonuclease Cas4/endonuclease Cas1 fusion (cas4-cas1) from Leptospira interrogans serogroup Icterohaemorrhagiae serovar Lai (strain 56601).